The following is a 264-amino-acid chain: Probable transcriptional regulatory protein PPA1157 (264 aa).

Belongs to the TACO1 family.

The protein localises to the cytoplasm. This is Probable transcriptional regulatory protein PPA1157 from Cutibacterium acnes (strain DSM 16379 / KPA171202) (Propionibacterium acnes).